The following is a 701-amino-acid chain: Centrosomal protein of 83 kDa (701 aa).

Over residues 1-14 (MVVSTFTDMDTFPN) the composition is skewed to polar residues. The interval 1–23 (MVVSTFTDMDTFPNNFPPGGDSG) is disordered. Coiled-coil stretches lie at residues 40-634 (LRCE…SLIL) and 665-698 (HMQE…ELGS). Phosphoserine is present on Ser698.

The protein belongs to the CEP83 family. In terms of assembly, interacts with CEP164 and IFT20.

It localises to the cytoplasm. Its subcellular location is the cytoskeleton. It is found in the microtubule organizing center. The protein localises to the centrosome. The protein resides in the centriole. In terms of biological role, component of the distal appendage region of the centriole involved in the initiation of primary cilium assembly. May collaborate with IFT20 in the trafficking of ciliary membrane proteins from the Golgi complex to the cilium during the initiation of primary cilium assembly. The polypeptide is Centrosomal protein of 83 kDa (CEP83) (Homo sapiens (Human)).